Here is a 132-residue protein sequence, read N- to C-terminus: Transcription antitermination protein NusB (132 aa).

It belongs to the NusB family.

Its function is as follows. Involved in transcription antitermination. Required for transcription of ribosomal RNA (rRNA) genes. Binds specifically to the boxA antiterminator sequence of the ribosomal RNA (rrn) operons. In Campylobacter jejuni subsp. jejuni serotype O:2 (strain ATCC 700819 / NCTC 11168), this protein is Transcription antitermination protein NusB.